We begin with the raw amino-acid sequence, 280 residues long: Shikimate dehydrogenase (NADP(+)) (280 aa).

Residues 15–17 (SLS) and Thr-62 each bind shikimate. Residue Lys-66 is the Proton acceptor of the active site. The shikimate site is built by Asn-88 and Asp-104. NADP(+) contacts are provided by residues 128-132 (GAGGA), 151-156 (NRTEER), and Ile-222. Tyr-224 serves as a coordination point for shikimate. NADP(+) is bound at residue Gly-245.

It belongs to the shikimate dehydrogenase family. Homodimer.

The enzyme catalyses shikimate + NADP(+) = 3-dehydroshikimate + NADPH + H(+). Its pathway is metabolic intermediate biosynthesis; chorismate biosynthesis; chorismate from D-erythrose 4-phosphate and phosphoenolpyruvate: step 4/7. Functionally, involved in the biosynthesis of the chorismate, which leads to the biosynthesis of aromatic amino acids. Catalyzes the reversible NADPH linked reduction of 3-dehydroshikimate (DHSA) to yield shikimate (SA). This chain is Shikimate dehydrogenase (NADP(+)), found in Methanosarcina mazei (strain ATCC BAA-159 / DSM 3647 / Goe1 / Go1 / JCM 11833 / OCM 88) (Methanosarcina frisia).